A 266-amino-acid chain; its full sequence is Undecaprenyl-diphosphatase (266 aa).

The next 8 helical transmembrane spans lie at 1–21, 43–63, 83–103, 114–134, 144–164, 186–206, 219–239, and 245–265; these read MNIF…FLPI, FDVV…QAMI, SKLA…GMIF, VEII…ASWF, TISW…LIPG, IQFA…LILI, LLAM…VFFI, and VGMM…FFFI.

It belongs to the UppP family.

The protein localises to the cell inner membrane. The catalysed reaction is di-trans,octa-cis-undecaprenyl diphosphate + H2O = di-trans,octa-cis-undecaprenyl phosphate + phosphate + H(+). In terms of biological role, catalyzes the dephosphorylation of undecaprenyl diphosphate (UPP). Confers resistance to bacitracin. This chain is Undecaprenyl-diphosphatase, found in Ruthia magnifica subsp. Calyptogena magnifica.